A 351-amino-acid polypeptide reads, in one-letter code: S-adenosylmethionine:tRNA ribosyltransferase-isomerase (351 aa).

The protein belongs to the QueA family. In terms of assembly, monomer.

The protein resides in the cytoplasm. It catalyses the reaction 7-aminomethyl-7-carbaguanosine(34) in tRNA + S-adenosyl-L-methionine = epoxyqueuosine(34) in tRNA + adenine + L-methionine + 2 H(+). It participates in tRNA modification; tRNA-queuosine biosynthesis. In terms of biological role, transfers and isomerizes the ribose moiety from AdoMet to the 7-aminomethyl group of 7-deazaguanine (preQ1-tRNA) to give epoxyqueuosine (oQ-tRNA). This Sphingopyxis alaskensis (strain DSM 13593 / LMG 18877 / RB2256) (Sphingomonas alaskensis) protein is S-adenosylmethionine:tRNA ribosyltransferase-isomerase.